The sequence spans 149 residues: 3-hydroxyacyl-[acyl-carrier-protein] dehydratase FabZ (149 aa).

H50 is a catalytic residue.

The protein belongs to the thioester dehydratase family. FabZ subfamily.

It localises to the cytoplasm. It catalyses the reaction a (3R)-hydroxyacyl-[ACP] = a (2E)-enoyl-[ACP] + H2O. Involved in unsaturated fatty acids biosynthesis. Catalyzes the dehydration of short chain beta-hydroxyacyl-ACPs and long chain saturated and unsaturated beta-hydroxyacyl-ACPs. This Pediococcus pentosaceus (strain ATCC 25745 / CCUG 21536 / LMG 10740 / 183-1w) protein is 3-hydroxyacyl-[acyl-carrier-protein] dehydratase FabZ.